Consider the following 176-residue polypeptide: Variant surface antigen A (176 aa).

The first 29 residues, 1-29, serve as a signal peptide directing secretion; it reads MKKSIFSKKLLVSFGSLVALAAIPLIAIS. Residue C30 is the site of N-palmitoyl cysteine attachment. The S-diacylglycerol cysteine moiety is linked to residue C30. The tract at residues 33 to 176 is disordered; the sequence is TDNNSSQSQQ…TKTENTQHTS (144 aa). The segment covering 35-121 has biased composition (low complexity); it reads NNSSQSQQPG…GSNSESGMNS (87 aa). Copy 1 of the repeat occupies 123 to 135; sequence KTENTQQSEAPGT. The interval 123-176 is 2.5 X 13 AA repeats; it reads KTENTQQSEAPGTNTGNKTTSESNSESGMNSEKTENTQQSEAPGTKTENTQHTS. The segment covering 126–142 has biased composition (polar residues); sequence NTQQSEAPGTNTGNKTT. Residues 143–153 show a composition bias toward low complexity; sequence SESNSESGMNS. Copy 2 of the repeat occupies 155–167; sequence KTENTQQSEAPGT. Residues 158–176 are compositionally biased toward polar residues; that stretch reads NTQQSEAPGTKTENTQHTS. The stretch at 168–176 is one 3; truncated repeat; it reads KTENTQHTS.

The protein localises to the cell membrane. Functionally, responsible for the antigenic diversity for host adaptation. The sequence is that of Variant surface antigen A (vlpA) from Mesomycoplasma hyorhinis (Mycoplasma hyorhinis).